We begin with the raw amino-acid sequence, 1238 residues long: Multifunctional 2-oxoglutarate metabolism enzyme (1238 aa).

A 2-oxoglutarate dehydrogenase E1, N-terminal part region spans residues 1-41 (MANISSPFGQNEWLVEEMYRKFRDDPSSVDPSWHEFLVDYN). The segment at 42-97 (PESTAEPVLTDPTSTDKQPSATPQAKPAAAADPVASRAKPATTPTVANGTAAGSAA) is linker. The disordered stretch occupies residues 44-108 (STAEPVLTDP…PAKTTTTPPI (65 aa)). Positions 59–107 (QPSATPQAKPAAAADPVASRAKPATTPTVANGTAAGSAAAPAKTTTTPP) are enriched in low complexity. The interval 98–346 (APAKTTTTPP…LRTIHEMVLS (249 aa)) is succinyltransferase E2. Histidine 325 (proton acceptor; for succinyltransferase activity) is an active-site residue. The segment at 347–1238 (DSFWDEIFRE…QQEILDTAFG (892 aa)) is 2-oxoglutarate dehydrogenase E1, C-terminal part. Arginine 551 serves as a coordination point for thiamine diphosphate. Histidine 590 and serine 615 together coordinate 2-oxoglutarate. Thiamine diphosphate contacts are provided by serine 615, leucine 617, aspartate 657, alanine 658, alanine 659, and asparagine 690. Aspartate 657 contacts Mg(2+). 2 residues coordinate Mg(2+): asparagine 690 and isoleucine 692. A coiled-coil region spans residues 795–825 (DISLKEAEDALRDYQGQLERVFNEVRDLEKH). Histidine 1032 contacts 2-oxoglutarate. 7 residues coordinate acetyl-CoA: threonine 1050, arginine 1066, lysine 1101, serine 1104, glutamine 1154, arginine 1161, and arginine 1162.

This sequence belongs to the 2-oxoacid dehydrogenase family. Kgd subfamily. As to quaternary structure, homodimer. The 2-oxoglutarate dehydrogenase (ODH) complex contains multiple copies of three enzymatic components: 2-oxoglutarate dehydrogenase (E1), dihydrolipoamide succinyltransferase (E2) and lipoamide dehydrogenase (E3). Mg(2+) is required as a cofactor. Requires thiamine diphosphate as cofactor.

It carries out the reaction glyoxylate + 2-oxoglutarate + H(+) = 2-hydroxy-3-oxoadipate + CO2. The enzyme catalyses 2-oxoglutarate + H(+) = succinate semialdehyde + CO2. The catalysed reaction is N(6)-[(R)-lipoyl]-L-lysyl-[protein] + 2-oxoglutarate + H(+) = N(6)-[(R)-S(8)-succinyldihydrolipoyl]-L-lysyl-[protein] + CO2. It catalyses the reaction N(6)-[(R)-dihydrolipoyl]-L-lysyl-[protein] + succinyl-CoA = N(6)-[(R)-S(8)-succinyldihydrolipoyl]-L-lysyl-[protein] + CoA. It functions in the pathway carbohydrate metabolism; tricarboxylic acid cycle; succinate from 2-oxoglutarate (transferase route): step 1/2. The protein operates within carbohydrate metabolism; tricarboxylic acid cycle; succinyl-CoA from 2-oxoglutarate (dehydrogenase route): step 1/1. Alpha-ketoglutarate dehydrogenase and decarboxylase activities are inhibited by unphosphorylated GarA, and allosterically activated by acetyl-CoA, the main substrate of the TCA cycle. In terms of biological role, shows three enzymatic activities that share a first common step, the attack of thiamine-PP on 2-oxoglutarate (alpha-ketoglutarate, KG), leading to the formation of an enamine-thiamine-PP intermediate upon decarboxylation. Thus, displays KGD activity, catalyzing the decarboxylation from five-carbon 2-oxoglutarate to four-carbon succinate semialdehyde (SSA). Also catalyzes C-C bond formation between the activated aldehyde formed after decarboxylation of alpha-ketoglutarate and the carbonyl of glyoxylate (GLX), to yield 2-hydroxy-3-oxoadipate (HOA), which spontaneously decarboxylates to form 5-hydroxylevulinate (HLA). And is also a component of the 2-oxoglutarate dehydrogenase (ODH) complex, that catalyzes the overall conversion of 2-oxoglutarate to succinyl-CoA and CO(2). The KG decarboxylase and KG dehydrogenase reactions provide two alternative, tightly regulated, pathways connecting the oxidative and reductive branches of the TCA cycle. The chain is Multifunctional 2-oxoglutarate metabolism enzyme (kgd) from Mycobacterium leprae (strain TN).